The following is a 101-amino-acid chain: Protein RnfH (101 aa).

Belongs to the UPF0125 (RnfH) family.

The protein is Protein RnfH of Coxiella burnetii (strain RSA 331 / Henzerling II).